Consider the following 186-residue polypeptide: Imidazole glycerol phosphate synthase subunit HisH (186 aa).

A Glutamine amidotransferase type-1 domain is found at 1 to 186 (MIAIIDYGSG…KLLRNFGELA (186 aa)). Cys72 acts as the Nucleophile in catalysis. Catalysis depends on residues His167 and Glu169.

In terms of assembly, heterodimer of HisH and HisF.

It localises to the cytoplasm. The enzyme catalyses 5-[(5-phospho-1-deoxy-D-ribulos-1-ylimino)methylamino]-1-(5-phospho-beta-D-ribosyl)imidazole-4-carboxamide + L-glutamine = D-erythro-1-(imidazol-4-yl)glycerol 3-phosphate + 5-amino-1-(5-phospho-beta-D-ribosyl)imidazole-4-carboxamide + L-glutamate + H(+). It catalyses the reaction L-glutamine + H2O = L-glutamate + NH4(+). It functions in the pathway amino-acid biosynthesis; L-histidine biosynthesis; L-histidine from 5-phospho-alpha-D-ribose 1-diphosphate: step 5/9. IGPS catalyzes the conversion of PRFAR and glutamine to IGP, AICAR and glutamate. The HisH subunit catalyzes the hydrolysis of glutamine to glutamate and ammonia as part of the synthesis of IGP and AICAR. The resulting ammonia molecule is channeled to the active site of HisF. The chain is Imidazole glycerol phosphate synthase subunit HisH from Picrophilus torridus (strain ATCC 700027 / DSM 9790 / JCM 10055 / NBRC 100828 / KAW 2/3).